Consider the following 427-residue polypeptide: Serine--tRNA ligase (427 aa).

233 to 235 (TGE) is a binding site for L-serine. 264–266 (RSE) is a binding site for ATP. L-serine is bound at residue Glu287. 351–354 (EVSS) contacts ATP. Ser387 is an L-serine binding site.

The protein belongs to the class-II aminoacyl-tRNA synthetase family. Type-1 seryl-tRNA synthetase subfamily. As to quaternary structure, homodimer. The tRNA molecule binds across the dimer.

The protein localises to the cytoplasm. The enzyme catalyses tRNA(Ser) + L-serine + ATP = L-seryl-tRNA(Ser) + AMP + diphosphate + H(+). The catalysed reaction is tRNA(Sec) + L-serine + ATP = L-seryl-tRNA(Sec) + AMP + diphosphate + H(+). The protein operates within aminoacyl-tRNA biosynthesis; selenocysteinyl-tRNA(Sec) biosynthesis; L-seryl-tRNA(Sec) from L-serine and tRNA(Sec): step 1/1. In terms of biological role, catalyzes the attachment of serine to tRNA(Ser). Is also able to aminoacylate tRNA(Sec) with serine, to form the misacylated tRNA L-seryl-tRNA(Sec), which will be further converted into selenocysteinyl-tRNA(Sec). The sequence is that of Serine--tRNA ligase from Buchnera aphidicola subsp. Acyrthosiphon pisum (strain 5A).